Reading from the N-terminus, the 88-residue chain is Small ribosomal subunit protein uS15 (88 aa).

It belongs to the universal ribosomal protein uS15 family. Part of the 30S ribosomal subunit. Forms a bridge to the 50S subunit in the 70S ribosome, contacting the 23S rRNA.

Its function is as follows. One of the primary rRNA binding proteins, it binds directly to 16S rRNA where it helps nucleate assembly of the platform of the 30S subunit by binding and bridging several RNA helices of the 16S rRNA. Forms an intersubunit bridge (bridge B4) with the 23S rRNA of the 50S subunit in the ribosome. The polypeptide is Small ribosomal subunit protein uS15 (Pelobacter propionicus (strain DSM 2379 / NBRC 103807 / OttBd1)).